Here is a 459-residue protein sequence, read N- to C-terminus: Zinc finger transcription factor lin-29 (459 aa).

Polar residues predominate over residues 1–14 (MDQTVLDSAFNSPV). The tract at residues 1 to 73 (MDQTVLDSAF…GSTGSTPAHH (73 aa)) is disordered. Residues 16-56 (SGIAGTTTGSGSTTHFGVGTNFKVSVRSSSRSTDGTDSTDG) are compositionally biased toward low complexity. Residues 57 to 73 (ANSDNVTGSTGSTPAHH) are compositionally biased toward polar residues. 5 C2H2-type zinc fingers span residues 151-173 (YKCT…MRIH), 180-202 (GPCN…IRTH), 208-232 (YKCK…SRCH), 238-260 (FKCN…IPKH), and 269-291 (HICP…MTKH). An interacts with mab-10 region spans residues 390–406 (PGFNMITPLENIQRYNG). The span at 423 to 444 (VSSTPSSTSSSSAGSSSSQGGV) shows a compositional bias: low complexity. Residues 423-459 (VSSTPSSTSSSSAGSSSSQGGVFNPQSLINNMKNHSY) form a disordered region. The segment covering 446–459 (NPQSLINNMKNHSY) has biased composition (polar residues).

Interacts (via C-terminus) with transcription cofactor mab-10. In terms of tissue distribution, expressed in lateral hypodermal seam cells (at protein level).

Its subcellular location is the nucleus. In terms of biological role, transcription factor which regulates the expression of various genes, including those involved in cuticle synthesis and maintenance, such as collagens, and in lipid metabolism. Binds to promoter regions of genes, at 5'-[(T/G)TTTTTT(A/T/C/G)]-3' consensus sequences. Heterochronic protein which controls the choice of stage specific cell fates, including at the juvenile to adult transition. Promotes differentiation, together with transcriptional cofactor mab-10, perhaps as part of a transcriptional complex. Required for vulval morphogenesis and egg laying; perhaps by acting in a subset of the lateral seam cells. Involved in the exit of seam cells from the cell cycle. Required for specification of uterine pi-cell fate, acting upstream of lin-12 Notch signaling, perhaps via maintenance of lag-2 expression in the anchor cell (AC). Involved in morphogenesis of the specialized male tail used in mating. Acts cell non-autonomously from the hypodermis to regulate expression of genes in the intestine, including genes involved in lipid metabolism. May regulate vitellogenesis via the mTORC2 signaling mediated pathway, independently of daf-16. May promote nuclear accumulation of mab-10 in seam cells post-transcriptionally. Dispensable for seam cell fusion. Functionally, required for seam cell fusion. The protein is Zinc finger transcription factor lin-29 of Caenorhabditis elegans.